The sequence spans 114 residues: Non-specific lipid-transfer protein 2 (114 aa).

A signal peptide spans 1–23 (MEMFGKIACFVVFCMVVVAPHAE). 4 disulfides stabilise this stretch: C27–C73, C37–C50, C51–C96, and C71–C110.

Belongs to the plant LTP family.

Plant non-specific lipid-transfer proteins transfer phospholipids as well as galactolipids across membranes. May play a role in wax or cutin deposition in the cell walls of expanding epidermal cells and certain secretory tissues. This chain is Non-specific lipid-transfer protein 2 (LE16), found in Solanum lycopersicum (Tomato).